The following is a 298-amino-acid chain: Nucleotide-binding protein RSKD131_3085 (298 aa).

11 to 18 (GPSGAGRT) serves as a coordination point for ATP. Residue 58–61 (DVRN) coordinates GTP.

This sequence belongs to the RapZ-like family.

Displays ATPase and GTPase activities. The sequence is that of Nucleotide-binding protein RSKD131_3085 from Cereibacter sphaeroides (strain KD131 / KCTC 12085) (Rhodobacter sphaeroides).